We begin with the raw amino-acid sequence, 415 residues long: Proline-serine-threonine phosphatase-interacting protein 1 (415 aa).

The F-BAR domain occupies 5–264 (LQFRDAFWCR…TLEGCDVEGD (260 aa)). 2 coiled-coil regions span residues 94–133 (LALALREELRSLEEFRERQKEQRKKYEAIMDRVQKSKLSL) and 162–215 (SANG…TCEA). Phosphoserine is present on serine 318. Tyrosine 344 is modified (phosphotyrosine; by ABL1). The SH3 domain maps to 358-415 (SSAQDYRALYDYTAQNSDELDISAGDILAVILEGEDGWWTVERNGQRGFVPGSYLEKL).

Homodimer. Homotrimer. Interacts (via coiled-coil domain) with CD2AP, PTPN12 and PTPN18. Interacts (via SH3 domain) with ABL1 and WAS. Interacts (via SH3 and coiled-coil domains) with MEFV (via B-box zinc finger); the interaction allows binding of MEFV to PYCARD and facilitates formation of PYCARD pyroptosomes. Interacts with DNM2 and FASLG. Interacts with CD2. In terms of processing, dephosphorylated on Tyr-344 by PTPN18, this event negatively regulates the association of PSTPIP1 with SH2 domain-containing proteins as tyrosine kinase. Phosphorylation of Tyr-344 is probably required for subsequent phosphorylation at other tyrosine residues. Phosphorylation is induced by activation of the EGFR and PDGFR in a ABL1 dependent manner. The phosphorylation regulates the interaction with WAS and with MEFV. Highly expressed in adult lung and spleen, and weakly expressed in testis, muscle, kidney, brain and heart. Highly expressed in spleen and thymus, moderately in lung, brain and muscle, and weakly expressed in heart and liver (at protein level).

The protein localises to the cytoplasm. Its subcellular location is the perinuclear region. It localises to the cell projection. It is found in the lamellipodium. The protein resides in the cleavage furrow. The protein localises to the cytoskeleton. Its subcellular location is the cell membrane. It localises to the uropodium. Its function is as follows. Involved in regulation of the actin cytoskeleton. May regulate WAS actin-bundling activity. Bridges the interaction between ABL1 and PTPN18 leading to ABL1 dephosphorylation. May play a role as a scaffold protein between PTPN12 and WAS and allow PTPN12 to dephosphorylate WAS. Has the potential to physically couple CD2 and CD2AP to WAS. Acts downstream of CD2 and CD2AP to recruit WAS to the T-cell:APC contact site so as to promote the actin polymerization required for synapse induction during T-cell activation. Down-regulates CD2-stimulated adhesion through the coupling of PTPN12 to CD2. Also has a role in innate immunity and the inflammatory response. Recruited to inflammasomes by MEFV. Induces formation of pyroptosomes, large supramolecular structures composed of oligomerized PYCARD dimers which form prior to inflammatory apoptosis. Binding to MEFV allows MEFV to bind to PYCARD and facilitates pyroptosome formation. Regulates endocytosis and cell migration in neutrophils. The protein is Proline-serine-threonine phosphatase-interacting protein 1 (Pstpip1) of Mus musculus (Mouse).